Consider the following 121-residue polypeptide: Large ribosomal subunit protein uL18 (121 aa).

Belongs to the universal ribosomal protein uL18 family. Part of the 50S ribosomal subunit; part of the 5S rRNA/L5/L18/L25 subcomplex. Contacts the 5S and 23S rRNAs.

Functionally, this is one of the proteins that bind and probably mediate the attachment of the 5S RNA into the large ribosomal subunit, where it forms part of the central protuberance. The sequence is that of Large ribosomal subunit protein uL18 from Polaromonas naphthalenivorans (strain CJ2).